Consider the following 875-residue polypeptide: Valine--tRNA ligase (875 aa).

A 'HIGH' region motif is present at residues P45–H55. Positions K524 to S528 match the 'KMSKS' region motif. An ATP-binding site is contributed by K527. Residues V803 to E837 are a coiled coil.

Belongs to the class-I aminoacyl-tRNA synthetase family. ValS type 1 subfamily. In terms of assembly, monomer.

It localises to the cytoplasm. It catalyses the reaction tRNA(Val) + L-valine + ATP = L-valyl-tRNA(Val) + AMP + diphosphate. Functionally, catalyzes the attachment of valine to tRNA(Val). As ValRS can inadvertently accommodate and process structurally similar amino acids such as threonine, to avoid such errors, it has a 'posttransfer' editing activity that hydrolyzes mischarged Thr-tRNA(Val) in a tRNA-dependent manner. This Borrelia garinii subsp. bavariensis (strain ATCC BAA-2496 / DSM 23469 / PBi) (Borreliella bavariensis) protein is Valine--tRNA ligase.